The sequence spans 353 residues: Ornithine racemase (353 aa).

Residue Lys-35 is the Proton acceptor of the active site. The residue at position 35 (Lys-35) is an N6-(pyridoxal phosphate)lysine. Residue Arg-128 participates in substrate binding.

Belongs to the alanine racemase family. In terms of assembly, homodimer. The cofactor is pyridoxal 5'-phosphate.

The enzyme catalyses L-ornithine = D-ornithine. In terms of biological role, involved in the ornithine fermentation pathway. Catalyzes the conversion of L-ornithine to D-ornithine. OR could also racemize basic amino acids such as lysine and arginine. Serine, asparagine and alanine could be also converted by OR, but at a lower rate. This is Ornithine racemase from Acetoanaerobium sticklandii (strain ATCC 12662 / DSM 519 / JCM 1433 / CCUG 9281 / NCIMB 10654 / HF) (Clostridium sticklandii).